We begin with the raw amino-acid sequence, 261 residues long: Claudin-18 (261 aa).

Residues 1–6 (MATTTC) are Cytoplasmic-facing. The helical transmembrane segment at 7 to 27 (QVVGLLLSLLGLAGCIAATGM) threads the bilayer. Topologically, residues 28 to 80 (DMWSTQDLYDNPVTSVFQYEGLWRSCVQQSSGFTECRPYFTILGLPAMLQAVR) are extracellular. Residues 81–101 (ALMIVGIVLGVIGILVSIFAL) form a helical membrane-spanning segment. The Cytoplasmic portion of the chain corresponds to 102–122 (KCIRIGSMDDSAKAKMTLTSG). The chain crosses the membrane as a helical span at residues 123-143 (IMFIISGVCAIIGVSVFANML). Residues 144–173 (VTNFWMSTANMYSGMGGMVQTVQTRYTFGA) lie on the Extracellular side of the membrane. Residues 174 to 194 (ALFVGWIAGGLTLIGGVMMCI) form a helical membrane-spanning segment. At 195-261 (ACRGLTPDDR…QSHPTKYDYV (67 aa)) the chain is on the cytoplasmic side. The interval 195 to 261 (ACRGLTPDDR…QSHPTKYDYV (67 aa)) is required for role in regulation of RANKL-induced osteoclast differentiation. The residue at position 214 (Ser214) is a Phosphoserine. Positions 242–261 (DGGARTEDDEQSHPTKYDYV) are disordered.

This sequence belongs to the claudin family. As to quaternary structure, interacts with TJP2/ZO-2. Interacts with TJP1/ZO-1. Interacts with YAP1 (phosphorylated); the interaction sequesters YAP1 away from the nucleus and thereby restricts transcription of YAP1 target genes. Interacts with CLDN19. In terms of tissue distribution, expressed in the lung (at protein level).

The protein localises to the cell junction. Its subcellular location is the tight junction. The protein resides in the cell membrane. Involved in alveolar fluid homeostasis via regulation of alveolar epithelial tight junction composition and therefore ion transport and solute permeability, potentially via downstream regulation of the actin cytoskeleton organization and beta-2-adrenergic signaling. Required for lung alveolarization and maintenance of the paracellular alveolar epithelial barrier. Acts to maintain epithelial progenitor cell proliferation and organ size, via regulation of YAP1 localization away from the nucleus and thereby restriction of YAP1 target gene transcription. Acts as a negative regulator of RANKL-induced osteoclast differentiation, potentially via relocation of TJP2/ZO-2 away from the nucleus, subsequently involved in bone resorption in response to calcium deficiency. Mediates the osteoprotective effects of estrogen, potentially via acting downstream of estrogen signaling independently of RANKL signaling pathways. In terms of biological role, required for the formation of the gastric paracellular barrier via its role in tight junction formation, thereby involved in the response to gastric acidification. This Rattus norvegicus (Rat) protein is Claudin-18.